Here is a 548-residue protein sequence, read N- to C-terminus: Chaperonin GroEL (548 aa).

Residues 30–33, K51, 87–91, G415, and D495 contribute to the ATP site; these read TLGP and DGTTT.

The protein belongs to the chaperonin (HSP60) family. In terms of assembly, forms a cylinder of 14 subunits composed of two heptameric rings stacked back-to-back. Interacts with the co-chaperonin GroES.

Its subcellular location is the cytoplasm. The catalysed reaction is ATP + H2O + a folded polypeptide = ADP + phosphate + an unfolded polypeptide.. Its function is as follows. Together with its co-chaperonin GroES, plays an essential role in assisting protein folding. The GroEL-GroES system forms a nano-cage that allows encapsulation of the non-native substrate proteins and provides a physical environment optimized to promote and accelerate protein folding. The protein is Chaperonin GroEL of Erwinia tasmaniensis (strain DSM 17950 / CFBP 7177 / CIP 109463 / NCPPB 4357 / Et1/99).